Here is a 186-residue protein sequence, read N- to C-terminus: Elongation factor P (186 aa).

This sequence belongs to the elongation factor P family.

The protein localises to the cytoplasm. It functions in the pathway protein biosynthesis; polypeptide chain elongation. Its function is as follows. Involved in peptide bond synthesis. Stimulates efficient translation and peptide-bond synthesis on native or reconstituted 70S ribosomes in vitro. Probably functions indirectly by altering the affinity of the ribosome for aminoacyl-tRNA, thus increasing their reactivity as acceptors for peptidyl transferase. The polypeptide is Elongation factor P (Clostridium acetobutylicum (strain ATCC 824 / DSM 792 / JCM 1419 / IAM 19013 / LMG 5710 / NBRC 13948 / NRRL B-527 / VKM B-1787 / 2291 / W)).